The sequence spans 96 residues: Small ribosomal subunit protein bS6 (96 aa).

This sequence belongs to the bacterial ribosomal protein bS6 family.

In terms of biological role, binds together with bS18 to 16S ribosomal RNA. The sequence is that of Small ribosomal subunit protein bS6 from Streptococcus thermophilus (strain ATCC BAA-250 / LMG 18311).